Consider the following 177-residue polypeptide: MKQILNILPMFIFFIFYKFYDIFIASGSLIVISGLICIIHWIFYNEIDKISLFSFLSVFFFGSLTIFFHNSQFIKWKITIIYIIFSLVLLISQFFTRKPMIQRFLEKDIKISNIYWRKINFIWSLFFLFCAILNIYIAYYFSETIWVNFKVFGFTSLTFFLILITSIYINCKISKNK.

The next 5 helical transmembrane spans lie at 22-42 (IFIA…IHWI), 50-70 (ISLF…FFHN), 76-96 (WKIT…QFFT), 121-141 (FIWS…AYYF), and 149-169 (FKVF…SIYI).

Belongs to the YciB family.

The protein localises to the cell inner membrane. In terms of biological role, plays a role in cell envelope biogenesis, maintenance of cell envelope integrity and membrane homeostasis. This Buchnera aphidicola subsp. Acyrthosiphon pisum (strain APS) (Acyrthosiphon pisum symbiotic bacterium) protein is Inner membrane-spanning protein YciB.